The primary structure comprises 140 residues: Large ribosomal subunit protein uL13 (140 aa).

The protein belongs to the universal ribosomal protein uL13 family. As to quaternary structure, part of the 50S ribosomal subunit.

This protein is one of the early assembly proteins of the 50S ribosomal subunit, although it is not seen to bind rRNA by itself. It is important during the early stages of 50S assembly. The protein is Large ribosomal subunit protein uL13 of Sulfurimonas denitrificans (strain ATCC 33889 / DSM 1251) (Thiomicrospira denitrificans (strain ATCC 33889 / DSM 1251)).